We begin with the raw amino-acid sequence, 401 residues long: Thermophilic serine proteinase (401 aa).

The first 24 residues, 1–24, serve as a signal peptide directing secretion; that stretch reads MKFKAIVSLSLAVSMSLFPFLVEA. Residues 25-121 constitute a propeptide that is removed on maturation; the sequence is ASNDGVESPK…AEPNYLFNAA (97 aa). Asp126 contributes to the Ca(2+) binding site. Residues 133 to 399 form the Peptidase S8 domain; sequence QYGPQNTYTD…YGRINSYNAV (267 aa). The active-site Charge relay system is Asp160. The Ca(2+) site is built by Pro168, Asp169, Asp171, Asp179, Asp184, and Asp186. His193 functions as the Charge relay system in the catalytic mechanism. Glu204, Asn207, Thr209, and Ile211 together coordinate Ca(2+). A disulfide bond links Cys258 and Cys260. Na(+) is bound by residues Tyr297, Val300, and Asp323. Ser347 functions as the Charge relay system in the catalytic mechanism.

Belongs to the peptidase S8 family. Ca(2+) is required as a cofactor. The cofactor is Na(+).

The protein resides in the secreted. The chain is Thermophilic serine proteinase from Bacillus sp. (strain AK1).